The following is a 343-amino-acid chain: Fanconi anemia group F protein (343 aa).

As to quaternary structure, belongs to the multisubunit FA complex composed of FANCA, FANCB, FANCC, FANCE, FANCF, FANCG, FANCL/PHF9 and FANCM. In complex with FANCA, FANCG and FANCL, but not with FANCC, nor FANCE, interacts with HES1; this interaction may be essential for the stability and nuclear localization of FA core complex proteins.

Its subcellular location is the nucleus. DNA repair protein that may operate in a postreplication repair or a cell cycle checkpoint function. May be implicated in interstrand DNA cross-link repair and in the maintenance of normal chromosome stability. The chain is Fanconi anemia group F protein from Mus musculus (Mouse).